The sequence spans 471 residues: Anthranilate 1,2-dioxygenase large subunit (471 aa).

The 109-residue stretch at 52–160 (IYACHESEIP…IASYRGFVFV (109 aa)) folds into the Rieske domain. Residues C93, H95, C113, and H116 each contribute to the [2Fe-2S] cluster site. Residues H220, H225, and D379 each contribute to the Fe cation site.

It belongs to the bacterial ring-hydroxylating dioxygenase alpha subunit family. In terms of assembly, the anthranilate dioxygenase (AntDO) multicomponent enzyme system is composed of an oxygenase component and a NADH:acceptor reductase component (AntC). The oxygenase component is a heterohexamer of 3 large (AntA) and 3 small (AntB) subunits. The cofactor is Fe cation. Requires [2Fe-2S] cluster as cofactor.

The enzyme catalyses anthranilate + NADH + O2 + 3 H(+) = catechol + NH4(+) + CO2 + NAD(+). The catalysed reaction is anthranilate + NADPH + O2 + 3 H(+) = catechol + NH4(+) + CO2 + NADP(+). Its pathway is aromatic compound metabolism; anthranilate degradation via hydroxylation; catechol from anthranilate: step 1/1. In terms of biological role, component of anthranilate dioxygenase multicomponent enzyme system which catalyzes the incorporation of both atoms of molecular oxygen into anthranilate to form catechol. This chain is Anthranilate 1,2-dioxygenase large subunit, found in Acinetobacter baylyi (strain ATCC 33305 / BD413 / ADP1).